The chain runs to 278 residues: Undecaprenyl-diphosphatase (278 aa).

The next 6 helical transmembrane spans lie at 44–64 (FLEM…MTIY), 84–104 (WQLW…AVPL), 112–132 (FNFM…FIWI), 187–207 (SVAA…YSGL), 224–244 (VWIL…VIRF), and 254–274 (FTVF…YAFI).

This sequence belongs to the UppP family.

The protein resides in the cell membrane. It catalyses the reaction di-trans,octa-cis-undecaprenyl diphosphate + H2O = di-trans,octa-cis-undecaprenyl phosphate + phosphate + H(+). In terms of biological role, catalyzes the dephosphorylation of undecaprenyl diphosphate (UPP). Confers resistance to bacitracin. This is Undecaprenyl-diphosphatase from Streptococcus suis (strain 98HAH33).